Consider the following 2249-residue polypeptide: Endoribonuclease Dcr-1 (2249 aa).

The tract at residues 1–371 is essential for miRNA substrate recognition; sequence MAFHWCDNNL…SPKVRRLLQT (371 aa). Residues 1 to 690 are important for interaction with loqs isoform PB (loqs-PB); it reads MAFHWCDNNL…SKQPPTACDI (690 aa). Positions 1–761 are helicase domain; that stretch reads MAFHWCDNNL…AEIDTAHSLA (761 aa). The interval 1–1042 is necessary for processing certain pre-miRNas, such as pre-let 7 and pre-bantam; that stretch reads MAFHWCDNNL…VSLELAKERV (1042 aa). 37–44 contacts ATP; it reads LGHRSSKE. Residues 371 to 491 form a dispensable for activity and substrate recognition region; that stretch reads TLRCFKPEEV…HHRDHNDGSD (121 aa). The tract at residues 436–486 is disordered; that stretch reads TTEDRQTNRSAARVTPTPTPAHAKPKPSSGANTAQPRTRRRVYTRRHHRDH. Residues 472-484 show a composition bias toward basic residues; that stretch reads RTRRRVYTRRHHR. The Helicase C-terminal domain occupies 485–648; sequence DHNDGSDTLC…TGDTTEADSD (164 aa). The segment at 496 to 606 is essential for miRNA substrate recognition; it reads LIYCNQNHTA…VQCKGRARAA (111 aa). The tract at residues 617-761 is dispensable for activity and substrate recognition; that stretch reads SYKSPTVGSV…AEIDTAHSLA (145 aa). Disordered regions lie at residues 640–665 and 705–757; these read GDTT…PYTF and LDTS…IDTA. The span at 716–726 shows a compositional bias: low complexity; it reads SMSNTSPSESS. Residues 825–920 form the Dicer dsRNA-binding fold domain; sequence AIALVNKYCA…QPIGKEGFRA (96 aa). Residues 924 to 957 are wing domain; the sequence is DWECFELEPEDEQIVQLSDEPRPGTTKRRQYYYK. Residues 963–1108 are platform domain; sequence FCDCRPVAGA…WQFLELIQAN (146 aa). The PAZ domain occupies 1100–1246; the sequence is QFLELIQANG…LVPELCTVHP (147 aa). The interval 1147–2249 is essential for production of mature miRNAs from pre-miRNAs. Also important for proper formation of the siRISC complex but is dispensable for biogenesis of siRNAs; it reads QYFYVAEICP…KKQGLIAKKD (1103 aa). Positions 1314–1351 are disordered; it reads ESKQKESLKDDTINGKDLADVEKKPTSEETQLDKDSKD. Ser-1423 is subject to Phosphoserine. The segment at 1426–1477 is disordered; sequence FWDVSNGESGFKGPKSSQNKQGGKGKAKGPAKPTFNYYDSDNSLGSSYDDDD. Over residues 1437-1446 the composition is skewed to low complexity; that stretch reads KGPKSSQNKQ. Over residues 1462 to 1471 the composition is skewed to polar residues; sequence YYDSDNSLGS. RNase III domains are found at residues 1698–1919 and 1993–2150; these read ITSA…IECG and FEEF…LDSN. Residues Glu-1745 and Asp-1749 each coordinate Mg(2+). Ser-1877 and Ser-1880 each carry phosphoserine. Mg(2+) is bound by residues Asp-1905, Glu-1908, Glu-2032, Asp-2136, and Glu-2139. Positions 2175 to 2241 constitute a DRBM domain; that stretch reads VPKSPIRELL…AKCALRQLKK (67 aa).

The protein belongs to the helicase family. Dicer subfamily. In terms of assembly, component of the miRNA-directed RISC loading complex (miRLC), composed of at least Dcr-1, AGO1 and loqs, which processes pre-miRNAs and loads the resulting miRNAs into the Argonaute 1 (AGO1)-containing RNA-induced silencing complex (miRISC). Interacts (via helicase domain) with dicing cofactor loqs isoform-PB (loqs-PB) (via DRBM 3 domain); this interaction enhances processing of pre-miRNAs by increasing substrate binding affinity of the dicer. Also able to interact with loqs isoforms PA and PC, however the relevance of such interactions are unclear in vivo. Different regions of the Dcr-1-loqs-PB heterodimer collaborate to recognize, bind and position the pre-miRNA for Dcr-1 mediated cleavage. In the absence of authentic miRNA substrates, the heterodimer favors a closed, catalytically incompetent, conformation, whereas binding of authentic pre-miRNA substrates stabilizes the relatively rare open, catalytically competent, conformation of the heterodimer. During substrate recognition, the Dcr-1 PAZ domain and pre-miRNA interact with the DRBM 1 domain of loqs-PB, which likely contributes to substrate recognition and stabilization. At the miRNA binding stage, the Dcr-1 DRBM domain and loqs-PB DRBM domains then bind the pre-miRNA in tandem to form a tight 'belt' around the pre-miRNA stem, the pre-miRNA loop is docked in the loop-binding region formed by DUF283, DRBM and part of the N terminus of Dcr-1, and the loqs-PB DRBM 1 and the wing domain of Dcr-1 act together to bind the 5' and 3' pre-miRNA termini within the PAZ and platform domains of Dcr-1. These interactions between the proteins and their pre-miRNA substrate stabilize a distorted form of the pre-miRNA and position the scissile phosphodiester bonds of the pre-miRNA at the RNase III catalytic cleavage sites of Dcr-1. Following Dcr-1 mediated cleavage, the miRNA duplex remains bound to loqs-PB DRBM 1, which dissociates from the Dcr-1 RNase III 1 domain but remains in contact with the PAZ and wing domains, suggesting that the heterodimer presents the mature miRNA to Ago2 for loading into the RNA-induced silencing complex (miRISC). Interacts with AGO2 and Fmr1 to form a RNA-induced silencing complex (siRISC), a ribonucleoprotein (RNP) complex involved in translation regulation; other components of the complex are RpL5, RpL11, AGO2 and Rm62. Interacts with piwi and vas; these interactions occur in the polar granules. Requires Mg(2+) as cofactor. Mn(2+) serves as cofactor.

The protein resides in the cytoplasm. It localises to the cytosol. It carries out the reaction Endonucleolytic cleavage to 5'-phosphomonoester.. With respect to regulation, activity towards pre-miRNAs is not inhibited by inorganic phosphate. In terms of biological role, endoribonuclease which functions in microRNA- (miRNA) gene silencing and, independently of its ribonuclease III activity, also acts in the short interfering RNA- (siRNA) gene silencing pathway. Cleaves hairpin precursor miRNAs (pre-miRNA) to generate mature miRNAs (miRNAs) that are between twenty-one to twenty-four nucleotides in length and function in RNA silencing and post-transcriptional regulation of gene expression. Also functions in miRNA loading and assembly of the Argonaute 1 (AGO1)-containing RNA-induced silencing complex (miRISC), with the miRNAs serving as a guide to direct the miRISC to complementary RNAs to degrade them or prevent their translation. Independently of its catalytic activity, functions in the siRNA silencing pathway by promoting assembly of the siRNA-directed Argonaute 2 (AGO2)-containing RISC (siRISC). Required for the proper formation of a stable intermediate (R2) in siRISC assembly, which is formed from the R1 precursor complex (containing Dcr-2, R2D2 and the siRNA) and is used for assembly of the mature (R3) siRISC complex. It is not required for siRNA biogenesis. During embryogenesis, involved in germline fate determination. Post-transcriptionally regulates mei-P26 expression through the microRNA pathway, which in turn post-translationally regulates myc protein levels; involved in regulating cell and tissue growth. The polypeptide is Endoribonuclease Dcr-1 (Drosophila melanogaster (Fruit fly)).